Here is a 174-residue protein sequence, read N- to C-terminus: ATP-dependent protease subunit HslV (174 aa).

Thr-2 is an active-site residue. Na(+) is bound by residues Gly-157, Cys-160, and Thr-163.

Belongs to the peptidase T1B family. HslV subfamily. A double ring-shaped homohexamer of HslV is capped on each side by a ring-shaped HslU homohexamer. The assembly of the HslU/HslV complex is dependent on binding of ATP.

Its subcellular location is the cytoplasm. The enzyme catalyses ATP-dependent cleavage of peptide bonds with broad specificity.. With respect to regulation, allosterically activated by HslU binding. Functionally, protease subunit of a proteasome-like degradation complex believed to be a general protein degrading machinery. The sequence is that of ATP-dependent protease subunit HslV from Shewanella halifaxensis (strain HAW-EB4).